The chain runs to 173 residues: NADH-quinone oxidoreductase subunit B (173 aa).

4 residues coordinate [4Fe-4S] cluster: Cys46, Cys47, Cys112, and Cys142.

The protein belongs to the complex I 20 kDa subunit family. As to quaternary structure, NDH-1 is composed of 14 different subunits. Subunits NuoB, C, D, E, F, and G constitute the peripheral sector of the complex. The cofactor is [4Fe-4S] cluster.

It is found in the cell membrane. The enzyme catalyses a quinone + NADH + 5 H(+)(in) = a quinol + NAD(+) + 4 H(+)(out). Its function is as follows. NDH-1 shuttles electrons from NADH, via FMN and iron-sulfur (Fe-S) centers, to quinones in the respiratory chain. The immediate electron acceptor for the enzyme in this species is believed to be a menaquinone. Couples the redox reaction to proton translocation (for every two electrons transferred, four hydrogen ions are translocated across the cytoplasmic membrane), and thus conserves the redox energy in a proton gradient. The protein is NADH-quinone oxidoreductase subunit B of Desulfitobacterium hafniense (strain DSM 10664 / DCB-2).